The sequence spans 314 residues: Methionyl-tRNA formyltransferase (314 aa).

S111 to P114 contacts (6S)-5,6,7,8-tetrahydrofolate.

It belongs to the Fmt family.

The catalysed reaction is L-methionyl-tRNA(fMet) + (6R)-10-formyltetrahydrofolate = N-formyl-L-methionyl-tRNA(fMet) + (6S)-5,6,7,8-tetrahydrofolate + H(+). Attaches a formyl group to the free amino group of methionyl-tRNA(fMet). The formyl group appears to play a dual role in the initiator identity of N-formylmethionyl-tRNA by promoting its recognition by IF2 and preventing the misappropriation of this tRNA by the elongation apparatus. This is Methionyl-tRNA formyltransferase from Coxiella burnetii (strain CbuG_Q212) (Coxiella burnetii (strain Q212)).